Consider the following 82-residue polypeptide: Cobrotoxin-b (82 aa).

The first 21 residues, 1–21 (MKTLLLTLLVVTIVCLDLGYT), serve as a signal peptide directing secretion. Disulfide bonds link cysteine 24-cysteine 44, cysteine 38-cysteine 61, cysteine 63-cysteine 74, and cysteine 75-cysteine 80.

Belongs to the three-finger toxin family. Short-chain subfamily. Type I alpha-neurotoxin sub-subfamily. Expressed by the venom gland.

The protein localises to the secreted. Its function is as follows. Binds to muscle nicotinic acetylcholine receptor (nAChR) and inhibit acetylcholine from binding to the receptor, thereby impairing neuromuscular transmission. Produces peripheral paralysis by blocking neuromuscular transmission at the postsynaptic site. Has a lower toxicity than cobrotoxin. The chain is Cobrotoxin-b from Naja atra (Chinese cobra).